A 455-amino-acid polypeptide reads, in one-letter code: mRNA cleavage and polyadenylation factor CLP1 (455 aa).

ATP contacts are provided by glutamate 28 and lysine 67. Residues 112-131 (EAAARNNGGGRSAPHGPRVL) form a disordered region. 137–142 (GCGRTS) lines the ATP pocket.

It belongs to the Clp1 family. Clp1 subfamily. In terms of assembly, component of a pre-mRNA cleavage factor complex. Interacts directly with PCF11.

The protein localises to the nucleus. Functionally, required for endonucleolytic cleavage during polyadenylation-dependent pre-mRNA 3'-end formation. This is mRNA cleavage and polyadenylation factor CLP1 from Pyricularia oryzae (strain 70-15 / ATCC MYA-4617 / FGSC 8958) (Rice blast fungus).